Consider the following 518-residue polypeptide: Serine/threonine-protein kinase UL13 (518 aa).

Disordered regions lie at residues 1–22 (MDESGRQRPASHVAADISPQGA) and 39–120 (SRRA…PSPP). Over residues 44–61 (GRPSGPSPRDGAVSGARP) the composition is skewed to low complexity. The 368-residue stretch at 151-518 (PGARSFGGSG…ANPAARHSLS (368 aa)) folds into the Protein kinase domain. ATP is bound by residues 157-165 (GGSGGYGEV) and Lys-176. The Proton acceptor role is filled by Asp-277.

It belongs to the protein kinase superfamily. Ser/Thr protein kinase family. In terms of processing, autophosphorylated.

The protein resides in the virion tegument. Its subcellular location is the host nucleus. The catalysed reaction is L-seryl-[protein] + ATP = O-phospho-L-seryl-[protein] + ADP + H(+). The enzyme catalyses L-threonyl-[protein] + ATP = O-phospho-L-threonyl-[protein] + ADP + H(+). In terms of biological role, multifunctional serine/threonine kinase that plays a role in several processes including egress of virus particles from the nucleus, modulation of the actin cytoskeleton and regulation of viral and cellular gene expression. Regulates the nuclear localization of viral envelopment factors UL34 and UL31, by phosphorylating the US3 kinase, indicating a role in nuclear egress. Disrupts host nuclear lamins, including LMNA and LMNB1. Phosphorylates the viral Fc receptor composed of glycoproteins E (gE) and I (gI). Phosphorylation of glycoprotein E (gE) by UL13 alters its subcellular localization, from the host early endosome to the plasma membrane. Participates in the transcriptional regulation of cellular and viral mRNAs mainly by phosphorylating the viral transcriptional regulator ICP22. Additional substrates have been identified, including UL41, UL49 or host EF1D. The protein is Serine/threonine-protein kinase UL13 of Homo sapiens (Human).